A 394-amino-acid chain; its full sequence is Na(+)/H(+) antiporter NhaA (394 aa).

The next 11 helical transmembrane spans lie at 11–31 (LEAA…IFAN), 59–79 (LLMW…GMEV), 95–115 (IFPA…YWFI), 125–145 (GWAI…ALLS), 155–175 (FLLA…ALFF), 177–197 (HEMS…LVAM), 203–220 (TGLI…ASVL), 254–274 (ALAP…NAGV), 296–316 (LIIG…LLGI), 328–348 (IFAI…IAGL), and 365–385 (LGIL…LKIT).

The protein belongs to the NhaA Na(+)/H(+) (TC 2.A.33) antiporter family.

It is found in the cell inner membrane. It carries out the reaction Na(+)(in) + 2 H(+)(out) = Na(+)(out) + 2 H(+)(in). Na(+)/H(+) antiporter that extrudes sodium in exchange for external protons. The protein is Na(+)/H(+) antiporter NhaA of Actinobacillus pleuropneumoniae serotype 7 (strain AP76).